A 582-amino-acid chain; its full sequence is uncharacterized protein (582 aa).

The next 12 helical transmembrane spans lie at 29–49 (LFIV…FAAL), 117–137 (ISAP…MGLA), 155–175 (VWAT…MIIV), 225–245 (YVYI…YFLL), 254–274 (FISI…YLLI), 287–307 (ATVI…IVLI), 329–349 (YLYL…ALSV), 376–396 (SIFG…WGLI), 432–452 (IVYL…LFNI), 458–478 (LVVS…IALS), 491–511 (IGMA…PVFF), and 523–543 (IYLY…GNWI).

It is found in the cell membrane. This is an uncharacterized protein from Mycoplasmoides gallisepticum (strain R(low / passage 15 / clone 2)) (Mycoplasma gallisepticum).